The sequence spans 338 residues: Lipoate-protein ligase A (338 aa).

The 188-residue stretch at 29-216 (PATQRVLFLW…AFFSHYGERV (188 aa)) folds into the BPL/LPL catalytic domain. ATP-binding positions include R71, 76-79 (GAVF), and K134. K134 contacts (R)-lipoate.

The protein belongs to the LplA family. In terms of assembly, monomer.

The protein resides in the cytoplasm. The enzyme catalyses L-lysyl-[lipoyl-carrier protein] + (R)-lipoate + ATP = N(6)-[(R)-lipoyl]-L-lysyl-[lipoyl-carrier protein] + AMP + diphosphate + H(+). It participates in protein modification; protein lipoylation via exogenous pathway; protein N(6)-(lipoyl)lysine from lipoate: step 1/2. It functions in the pathway protein modification; protein lipoylation via exogenous pathway; protein N(6)-(lipoyl)lysine from lipoate: step 2/2. Its function is as follows. Catalyzes both the ATP-dependent activation of exogenously supplied lipoate to lipoyl-AMP and the transfer of the activated lipoyl onto the lipoyl domains of lipoate-dependent enzymes. The chain is Lipoate-protein ligase A from Klebsiella pneumoniae (strain 342).